The primary structure comprises 563 residues: Inorganic phosphate transporter PT2 (563 aa).

Disordered stretches follow at residues 1-51 (MAPR…SGEE) and 67-96 (DGGA…PAYS). Over 1–127 (MAPRYHSAAE…NGEKQSLLVP (127 aa)) the chain is Extracellular. A helical membrane pass occupies residues 128–148 (CLAVFSSNYNFTVTSIALFLM). At 149–168 (NQDPLYKDASDTVVGSSTVK) the chain is on the cytoplasmic side. The chain crosses the membrane as a helical span at residues 169-189 (MLSYAGAIVGMCTMGYLGDLI). Residues 190–192 (GRR) are Extracellular-facing. The chain crosses the membrane as a helical span at residues 193 to 213 (LAMILTLALVFIGALLSSICA). The Cytoplasmic segment spans residues 214–217 (WGDG). The helical transmembrane segment at 218 to 238 (VTVLVIMGVCRFVLGVGSGGV) threads the bilayer. The Extracellular segment spans residues 239–263 (YPLSAVSAAEGAGSEKSNDRSMRVS). A helical transmembrane segment spans residues 264 to 284 (WAYSMNVPGIMFPYIVALVLW). The Cytoplasmic portion of the chain corresponds to 285–291 (CTTHNVD). Residues 292–312 (VCFRILLGFGALPALLIWLPA) traverse the membrane as a helical segment. At 313–342 (WRMKEDRAYVAKDFAKHLAGVFVSRSYWRQ) the chain is on the extracellular side. A helical membrane pass occupies residues 343 to 363 (LLGTGVCWLLYDVTAYGILLV). At 364-380 (QPEITQSIWGNSSSVTD) the chain is on the cytoplasmic side. The helical transmembrane segment at 381 to 401 (VIWQNIILNGMGIPGCFMGIL) threads the bilayer. Residues 402–412 (VLKQMGVKWLQ) are Extracellular-facing. A helical transmembrane segment spans residues 413 to 433 (FWGFVGLAVSAFLMAATVEIL). At 434–440 (QGKAWAQ) the chain is on the cytoplasmic side. A helical membrane pass occupies residues 441–461 (LVLLCIVNFFINWGASITTFI). Residues 462 to 477 (LPSLVFPPEVRSTYSG) lie on the Extracellular side of the membrane. A helical transmembrane segment spans residues 478 to 498 (ISAALGKIGAVGGIYTMKAIL). At 499-504 (STGGLT) the chain is on the cytoplasmic side. Residues 505–525 (PMMICAGVPSLAAAILTWFYV) traverse the membrane as a helical segment. Topologically, residues 526-563 (DPVPNTLRSSFLQCFGSLAGSCPFIDCRKFRRGSRAFE) are extracellular.

It belongs to the major facilitator superfamily. Phosphate:H(+) symporter (TC 2.A.1.9) family.

The protein resides in the cell membrane. It catalyses the reaction phosphate(in) = phosphate(out). Inorganic phosphate transporter. Activity is likely sodium-independent. Exhibits higher activity under acidic pH, implying that either the monovalent form of phosphate is the preferred substrate or the transport activity is H(+)-dependent. The protein is Inorganic phosphate transporter PT2 of Toxoplasma gondii (strain ATCC 50861 / VEG).